A 466-amino-acid polypeptide reads, in one-letter code: Pentatricopeptide repeat-containing protein At4g01400, mitochondrial (466 aa).

The N-terminal 34 residues, 1–34 (MIRRPIYDFAAVFRHLTSPLSTSSRFLFYSSSEH), are a transit peptide targeting the mitochondrion. 8 PPR repeats span residues 118-152 (TGEI…NFTP), 153-188 (QPKH…GVMP), 189-223 (NTRS…DVVP), 224-258 (DVDS…GFVP), 259-293 (DRLS…GCNP), 294-328 (DLVH…GCSP), 329-363 (NSVS…GFSP), and 364-398 (HFSV…GETL).

It belongs to the PPR family. P subfamily.

The protein localises to the mitochondrion. This Arabidopsis thaliana (Mouse-ear cress) protein is Pentatricopeptide repeat-containing protein At4g01400, mitochondrial.